Consider the following 165-residue polypeptide: ER membrane protein complex subunit 5 (165 aa).

At 1-3 (MAP) the chain is on the cytoplasmic side. A helical transmembrane segment spans residues 4–22 (SLWKGLVGIGLFALAHAAF). Topologically, residues 23-77 (SAAQHYFPSSGIKWKRKCEFLQSSSFQDKIFRSMYYVYDRSYMRLTEKEDESLPI) are lumenal. A helical transmembrane segment spans residues 78–97 (DIVLQTLLAFAVTCYGIVHI). The Cytoplasmic portion of the chain corresponds to 98–165 (AGEFKDMDAT…KLRKLESLRR (68 aa)). The residue at position 154 (Ser-154) is a Phosphoserine.

It belongs to the membrane magnesium transporter (TC 1.A.67) family. In terms of assembly, component of the ER membrane protein complex (EMC).

It localises to the endoplasmic reticulum membrane. The protein resides in the golgi apparatus membrane. The protein localises to the early endosome membrane. Functionally, part of the endoplasmic reticulum membrane protein complex (EMC) that enables the energy-independent insertion into endoplasmic reticulum membranes of newly synthesized membrane proteins. Preferentially accommodates proteins with transmembrane domains that are weakly hydrophobic or contain destabilizing features such as charged and aromatic residues. Involved in the cotranslational insertion of multi-pass membrane proteins in which stop-transfer membrane-anchor sequences become ER membrane spanning helices. It is also required for the post-translational insertion of tail-anchored/TA proteins in endoplasmic reticulum membranes. By mediating the proper cotranslational insertion of N-terminal transmembrane domains in an N-exo topology, with translocated N-terminus in the lumen of the ER, controls the topology of multi-pass membrane proteins like the G protein-coupled receptors. By regulating the insertion of various proteins in membranes, it is indirectly involved in many cellular processes. May be involved in Mg(2+) transport. This Bos taurus (Bovine) protein is ER membrane protein complex subunit 5.